A 1113-amino-acid chain; its full sequence is Myosin-binding protein 1 (1113 aa).

A helical transmembrane segment spans residues 12 to 34 (LAFNEWLLMFMLFVNSIFSYVIA). A disordered region spans residues 209–229 (ESEAVFSDTEPKQESSLNHLP). One can recognise a GTD-binding domain in the interval 888-986 (SEGDRLKRQV…DLEAEIEYFR (99 aa)).

Interacts with myosin XI-K, XI-I and XI-1. Expressed in leaf epidermal cells, roots and root hairs.

It is found in the endomembrane system. Membrane-anchored myosin receptors that define a distinct, plant-specific transport vesicle compartment. The sequence is that of Myosin-binding protein 1 from Arabidopsis thaliana (Mouse-ear cress).